The sequence spans 315 residues: Diacylglycerol kinase (315 aa).

One can recognise a DAGKc domain in the interval 1 to 132; that stretch reads MRKRARIIYN…VDIGKMNNRY (132 aa). ATP is bound by residues 10-14, T41, 67-73, and T94; these read NPTSG and GDGTLNE. Mg(2+) contacts are provided by K213, D216, and Y218. E273 serves as the catalytic Proton acceptor.

It belongs to the diacylglycerol/lipid kinase family. As to quaternary structure, homodimer. It depends on Mg(2+) as a cofactor.

It carries out the reaction a 1,2-diacyl-sn-glycerol + ATP = a 1,2-diacyl-sn-glycero-3-phosphate + ADP + H(+). In terms of biological role, catalyzes the phosphorylation of diacylglycerol (DAG) into phosphatidic acid. Is a key enzyme involved in the production of lipoteichoic acid by reintroducing DAG formed from the breakdown of membrane phospholipids into the phosphatidylglycerol biosynthetic pathway. The sequence is that of Diacylglycerol kinase (dagK) from Staphylococcus aureus (strain MRSA252).